The following is a 151-amino-acid chain: D-aminoacyl-tRNA deacylase (151 aa).

The Gly-cisPro motif, important for rejection of L-amino acids signature appears at 137 to 138 (GP).

Belongs to the DTD family. Homodimer.

Its subcellular location is the cytoplasm. It carries out the reaction glycyl-tRNA(Ala) + H2O = tRNA(Ala) + glycine + H(+). The enzyme catalyses a D-aminoacyl-tRNA + H2O = a tRNA + a D-alpha-amino acid + H(+). In terms of biological role, an aminoacyl-tRNA editing enzyme that deacylates mischarged D-aminoacyl-tRNAs. Also deacylates mischarged glycyl-tRNA(Ala), protecting cells against glycine mischarging by AlaRS. Acts via tRNA-based rather than protein-based catalysis; rejects L-amino acids rather than detecting D-amino acids in the active site. By recycling D-aminoacyl-tRNA to D-amino acids and free tRNA molecules, this enzyme counteracts the toxicity associated with the formation of D-aminoacyl-tRNA entities in vivo and helps enforce protein L-homochirality. In Azoarcus sp. (strain BH72), this protein is D-aminoacyl-tRNA deacylase.